Consider the following 410-residue polypeptide: Mating-type locus allele B1 protein (410 aa).

The segment at 1 to 110 is variable domain between B alleles; it reads MSSDPNFSLI…FNVVSPDVGC (110 aa). Positions 107-184 form a DNA-binding region, homeobox; TALE-type; sequence DVGCRNLSED…NARRRSGWSH (78 aa). The interval 111 to 410 is highly conserved between B alleles; it reads RNLSEDLPAY…PFLCLSVAFV (300 aa). Disordered regions lie at residues 202–239, 278–335, and 374–395; these read RAKLSSSNQSTPPSSTSDSLSNNLDDVLSDNLGRPLTP, TPKP…TPEL, and ARGNRKVKALPKRAGKQQPDEV. The segment covering 205-233 has biased composition (low complexity); sequence LSSSNQSTPPSSTSDSLSNNLDDVLSDNL. A Nuclear localization signal motif is present at residues 276 to 308; sequence KKTPKPGMPRPVTTVAKRHPARKTKPAAKPKSR. Residues 291–307 show a composition bias toward basic residues; that stretch reads AKRHPARKTKPAAKPKS. Polar residues predominate over residues 312–335; that stretch reads PRASTTPSIDSTLDSSKLESTPEL. A not essential for B1 function region spans residues 333 to 410; that stretch reads PELSMCSTAD…PFLCLSVAFV (78 aa). Residues 375 to 388 show a composition bias toward basic residues; that stretch reads RGNRKVKALPKRAG.

This sequence belongs to the TALE/M-ATYP homeobox family.

Its subcellular location is the nucleus. In terms of biological role, the B locus has at least 25 alleles, and any combination of two different B alleles yields a multimeric regulatory protein, that activates genes responsible for the pathogenicity and for the sexual development of the fungus within the corn plant. This chain is Mating-type locus allele B1 protein, found in Mycosarcoma maydis (Corn smut fungus).